The sequence spans 356 residues: S-adenosylmethionine:tRNA ribosyltransferase-isomerase (356 aa).

This sequence belongs to the QueA family. Monomer.

It is found in the cytoplasm. The enzyme catalyses 7-aminomethyl-7-carbaguanosine(34) in tRNA + S-adenosyl-L-methionine = epoxyqueuosine(34) in tRNA + adenine + L-methionine + 2 H(+). The protein operates within tRNA modification; tRNA-queuosine biosynthesis. Functionally, transfers and isomerizes the ribose moiety from AdoMet to the 7-aminomethyl group of 7-deazaguanine (preQ1-tRNA) to give epoxyqueuosine (oQ-tRNA). In Serratia proteamaculans (strain 568), this protein is S-adenosylmethionine:tRNA ribosyltransferase-isomerase.